The primary structure comprises 639 residues: Phosphatidylinositol 3,4,5-trisphosphate 3-phosphatase cnrN (639 aa).

The 171-residue stretch at 20–190 (FKSKEMDLDL…NYFKEIVSGS (171 aa)) folds into the Phosphatase tensin-type domain. The active-site Phosphocysteine intermediate is Cys129. In terms of domain architecture, C2 tensin-type spans 195 to 350 (EFVLTFRSIE…LQMECRFQNN (156 aa)). Disordered stretches follow at residues 243 to 265 (INND…NNNN), 395 to 429 (NNIL…HSTP), 451 to 498 (SSSG…SCSS), 519 to 567 (NNNN…RKRK), and 598 to 628 (FTKK…DPSE). Low complexity-rich tracts occupy residues 244–265 (NNDN…NNNN), 395–424 (NNIL…LPSS), 458–486 (NSSR…SRSS), and 519–554 (NNNN…SNSN). Over residues 598–608 (FTKKINPNNNE) the composition is skewed to polar residues. The span at 619–628 (LKKETNDPSE) shows a compositional bias: basic and acidic residues.

Mg(2+) is required as a cofactor.

It catalyses the reaction a 1,2-diacyl-sn-glycero-3-phospho-(1D-myo-inositol-3,4,5-trisphosphate) + H2O = a 1,2-diacyl-sn-glycero-3-phospho-(1D-myo-inositol-4,5-bisphosphate) + phosphate. In terms of biological role, protein phosphatase that negatively regulates PI3K-dependent pathways. Regulates cAMP signal transduction to control territory size. During development, a lawn of Dictyostelium cells breaks up into territories where cells aggregate in dendritic streams to form groups of 20'000 cells. The polypeptide is Phosphatidylinositol 3,4,5-trisphosphate 3-phosphatase cnrN (cnrN) (Dictyostelium discoideum (Social amoeba)).